The following is a 79-amino-acid chain: Small ribosomal subunit protein bS16 (79 aa).

It belongs to the bacterial ribosomal protein bS16 family.

This chain is Small ribosomal subunit protein bS16, found in Nitratidesulfovibrio vulgaris (strain ATCC 29579 / DSM 644 / CCUG 34227 / NCIMB 8303 / VKM B-1760 / Hildenborough) (Desulfovibrio vulgaris).